Here is a 370-residue protein sequence, read N- to C-terminus: Flagellar P-ring protein (370 aa).

The N-terminal stretch at 1 to 21 is a signal peptide; it reads MKYILIKLSIVMIFIINSASK.

It belongs to the FlgI family. In terms of assembly, the basal body constitutes a major portion of the flagellar organelle and consists of four rings (L,P,S, and M) mounted on a central rod.

The protein resides in the bacterial flagellum basal body. Functionally, assembles around the rod to form the L-ring and probably protects the motor/basal body from shearing forces during rotation. This is Flagellar P-ring protein from Wigglesworthia glossinidia brevipalpis.